The chain runs to 381 residues: Queuine tRNA-ribosyltransferase (381 aa).

The active-site Proton acceptor is the Asp-96. Substrate-binding positions include 96 to 100 (DSGGF), Asp-150, Gln-193, and Gly-220. The RNA binding stretch occupies residues 251-257 (GVGSPDA). Asp-270 (nucleophile) is an active-site residue. The interval 275–279 (TRIAR) is RNA binding; important for wobble base 34 recognition. Zn(2+)-binding residues include Cys-308, Cys-310, Cys-313, and His-339.

Belongs to the queuine tRNA-ribosyltransferase family. As to quaternary structure, homodimer. Within each dimer, one monomer is responsible for RNA recognition and catalysis, while the other monomer binds to the replacement base PreQ1. Zn(2+) is required as a cofactor.

The enzyme catalyses 7-aminomethyl-7-carbaguanine + guanosine(34) in tRNA = 7-aminomethyl-7-carbaguanosine(34) in tRNA + guanine. It participates in tRNA modification; tRNA-queuosine biosynthesis. Its function is as follows. Catalyzes the base-exchange of a guanine (G) residue with the queuine precursor 7-aminomethyl-7-deazaguanine (PreQ1) at position 34 (anticodon wobble position) in tRNAs with GU(N) anticodons (tRNA-Asp, -Asn, -His and -Tyr). Catalysis occurs through a double-displacement mechanism. The nucleophile active site attacks the C1' of nucleotide 34 to detach the guanine base from the RNA, forming a covalent enzyme-RNA intermediate. The proton acceptor active site deprotonates the incoming PreQ1, allowing a nucleophilic attack on the C1' of the ribose to form the product. After dissociation, two additional enzymatic reactions on the tRNA convert PreQ1 to queuine (Q), resulting in the hypermodified nucleoside queuosine (7-(((4,5-cis-dihydroxy-2-cyclopenten-1-yl)amino)methyl)-7-deazaguanosine). In Bacillus subtilis (strain 168), this protein is Queuine tRNA-ribosyltransferase.